The following is a 259-amino-acid chain: MLTVISPAKTLDYDTPPVTERFTLPQYLDDSQALIQQLRELSPAQISELMHLSDKLAGLNAARFGSWTPDFTPANAKQALLAFKGDVYTGLDAESLAEDDFSYAQDHLRMLSGLYGLLRPLDLMQPYRLEMGTKLANARGKDLYAFWGTRISEWLNEALAEQGDDVLLNLASNEYFSAVKRSALKARVINVDFKDLKNGQYKIISFYAKKARGMMSRFVIQQRISDPEQLKQFDVQGYYYSAEQSKPDHLVFLRDHPAD.

The protein belongs to the UPF0246 family.

The polypeptide is UPF0246 protein PputGB1_4560 (Pseudomonas putida (strain GB-1)).